Here is a 201-residue protein sequence, read N- to C-terminus: FMN-dependent NADH:quinone oxidoreductase (201 aa).

FMN is bound by residues S10, 16-18 (SQS), 96-99 (MYNF), and 140-143 (SRGG).

It belongs to the azoreductase type 1 family. As to quaternary structure, homodimer. FMN is required as a cofactor.

The enzyme catalyses 2 a quinone + NADH + H(+) = 2 a 1,4-benzosemiquinone + NAD(+). It catalyses the reaction N,N-dimethyl-1,4-phenylenediamine + anthranilate + 2 NAD(+) = 2-(4-dimethylaminophenyl)diazenylbenzoate + 2 NADH + 2 H(+). Its function is as follows. Quinone reductase that provides resistance to thiol-specific stress caused by electrophilic quinones. Also exhibits azoreductase activity. Catalyzes the reductive cleavage of the azo bond in aromatic azo compounds to the corresponding amines. The protein is FMN-dependent NADH:quinone oxidoreductase of Salmonella arizonae (strain ATCC BAA-731 / CDC346-86 / RSK2980).